Reading from the N-terminus, the 94-residue chain is Small ribosomal subunit protein bS6 (94 aa).

The protein belongs to the bacterial ribosomal protein bS6 family.

In terms of biological role, binds together with bS18 to 16S ribosomal RNA. In Alkaliphilus metalliredigens (strain QYMF), this protein is Small ribosomal subunit protein bS6.